Consider the following 297-residue polypeptide: 4-hydroxy-tetrahydrodipicolinate synthase (297 aa).

Thr-47 lines the pyruvate pocket. The active-site Proton donor/acceptor is the Tyr-135. Lys-163 functions as the Schiff-base intermediate with substrate in the catalytic mechanism. Ile-205 contributes to the pyruvate binding site.

Belongs to the DapA family. Homotetramer; dimer of dimers.

It localises to the cytoplasm. It catalyses the reaction L-aspartate 4-semialdehyde + pyruvate = (2S,4S)-4-hydroxy-2,3,4,5-tetrahydrodipicolinate + H2O + H(+). Its pathway is amino-acid biosynthesis; L-lysine biosynthesis via DAP pathway; (S)-tetrahydrodipicolinate from L-aspartate: step 3/4. In terms of biological role, catalyzes the condensation of (S)-aspartate-beta-semialdehyde [(S)-ASA] and pyruvate to 4-hydroxy-tetrahydrodipicolinate (HTPA). The polypeptide is 4-hydroxy-tetrahydrodipicolinate synthase (Dehalococcoides mccartyi (strain ATCC BAA-2100 / JCM 16839 / KCTC 5957 / BAV1)).